Reading from the N-terminus, the 316-residue chain is Golgi to ER traffic protein 2 (316 aa).

The segment at 1 to 75 (MATELSDAEK…SDEEVEKSTK (75 aa)) is disordered. Over 1–167 (MATELSDAEK…LKYYKFKVSK (167 aa)) the chain is Cytoplasmic. Positions 7–19 (DAEKRKLLRERRQ) are enriched in basic and acidic residues. 2 stretches are compositionally biased toward polar residues: residues 22–48 (FSNG…STSV) and 56–65 (PSGNKKSSNV). A helical transmembrane segment spans residues 168–187 (LKSYIILIKWALLAPYVYFI). The Lumenal segment spans residues 188-209 (MHPNPTVLQASNLLSQIVERSN). Residues 210–229 (FFSIFTGLEIVFISIYYQML) traverse the membrane as a helical segment. Residues 230–276 (KKLQRDNNVTATQNAGGILKYLTMIPEGILPIRNIQGKIGLALEYFD) are Cytoplasmic-facing. The chain crosses the membrane as a helical span at residues 277–297 (VASMYVTDICFVLVLFGVMKY). Residues 298-316 (YHSSFPISVPIEPPIAGIQ) are Lumenal-facing.

This sequence belongs to the GET2 family. As to quaternary structure, component of the Golgi to ER traffic (GET) complex, which is composed of GET1, GET2 and GET3. Within the complex, GET1 and GET2 form a heterotetramer which is stabilized by phosphatidylinositol binding and which binds to the GET3 homodimer.

It localises to the endoplasmic reticulum membrane. The protein resides in the golgi apparatus membrane. Functionally, required for the post-translational delivery of tail-anchored (TA) proteins to the endoplasmic reticulum. Together with GET1, acts as a membrane receptor for soluble GET3, which recognizes and selectively binds the transmembrane domain of TA proteins in the cytosol. The GET complex cooperates with the HDEL receptor ERD2 to mediate the ATP-dependent retrieval of resident ER proteins that contain a C-terminal H-D-E-L retention signal from the Golgi to the ER. This chain is Golgi to ER traffic protein 2, found in Kluyveromyces lactis (strain ATCC 8585 / CBS 2359 / DSM 70799 / NBRC 1267 / NRRL Y-1140 / WM37) (Yeast).